A 465-amino-acid polypeptide reads, in one-letter code: Methionine aminopeptidase 2-2 (465 aa).

The span at 1–13 (MGSKTPNDHRRGP) shows a compositional bias: basic and acidic residues. The tract at residues 1-92 (MGSKTPNDHR…KKKTLLGGLQ (92 aa)) is disordered. Positions 44–55 (GETEDGEDEDDD) are enriched in acidic residues. Positions 71 to 86 (TKKKNKRKKNKKKKKT) are enriched in basic residues. His217 serves as a coordination point for substrate. A divalent metal cation is bound by residues Asp238, Asp249, and His318. A substrate-binding site is contributed by His326. A divalent metal cation contacts are provided by Glu351 and Glu446.

Belongs to the peptidase M24A family. Methionine aminopeptidase eukaryotic type 2 subfamily. The cofactor is Co(2+). It depends on Zn(2+) as a cofactor. Requires Mn(2+) as cofactor. Fe(2+) is required as a cofactor.

Its subcellular location is the cytoplasm. It catalyses the reaction Release of N-terminal amino acids, preferentially methionine, from peptides and arylamides.. In terms of biological role, cotranslationally removes the N-terminal methionine from nascent proteins. The N-terminal methionine is often cleaved when the second residue in the primary sequence is small and uncharged (Met-Ala-, Cys, Gly, Pro, Ser, Thr, or Val). The polypeptide is Methionine aminopeptidase 2-2 (Blastomyces gilchristii (strain SLH14081) (Blastomyces dermatitidis)).